A 195-amino-acid chain; its full sequence is UMP-CMP kinase (195 aa).

17-22 (GSGKGT) provides a ligand contact to ATP. An NMP region spans residues 37 to 66 (SAGDLLRQEQQSGSKDGEMIATMIKNGEIV). A ribonucleoside 5'-phosphate contacts are provided by residues R43, 64–66 (EIV), and 91–94 (GFPR). A CMP-binding site is contributed by N98. The segment at 131–141 (KRGESSGRSDD) is LID. R132 lines the ATP pocket. R138 and R149 together coordinate a ribonucleoside 5'-phosphate. ATP is bound at residue R177.

Belongs to the adenylate kinase family. UMP-CMP kinase subfamily. Monomer. It depends on Mg(2+) as a cofactor.

It is found in the cytoplasm. The protein resides in the nucleus. It catalyses the reaction CMP + ATP = CDP + ADP. The catalysed reaction is dCMP + ATP = dCDP + ADP. It carries out the reaction UMP + ATP = UDP + ADP. Functionally, catalyzes the phosphorylation of pyrimidine nucleoside monophosphates at the expense of ATP. Plays an important role in de novo pyrimidine nucleotide biosynthesis. Has preference for UMP and CMP as phosphate acceptors. This is UMP-CMP kinase from Dictyostelium discoideum (Social amoeba).